Consider the following 259-residue polypeptide: Interleukin-1 receptor-associated kinase 1-binding protein 1 (259 aa).

4 positions are modified to phosphoserine: S55, S61, S63, and S234. T236 is modified (phosphothreonine). Positions 239–259 (AASKVFITFEVKGKEKKKKHL) are required for nuclear localization (NLS). Phosphoserine is present on S241. Position 246 is a phosphothreonine (T246).

Belongs to the IRAK1BP1 family. In terms of assembly, interacts with IRAK1 and RELA. Interacts with HSPA8 and HSPA1. May interact with Listeria monocytogenes actA. In terms of processing, phosphorylation at Ser-55, Ser-61 and/or Ser-63 is required for full activity. Phosphorylated on at least one of Ser-234, Thr-236, Ser-241 and Thr-246 upon TNF-alpha activation, which favors nuclear translocation. As to expression, expressed in testis, brain, kidney, liver and heart.

Its subcellular location is the cytoplasm. The protein localises to the nucleus. Component of the IRAK1-dependent TNFRSF1A signaling pathway that leads to NF-kappa-B activation and is required for cell survival. Acts by enhancing RELA transcriptional activity. The chain is Interleukin-1 receptor-associated kinase 1-binding protein 1 (Irak1bp1) from Mus musculus (Mouse).